Here is a 433-residue protein sequence, read N- to C-terminus: Protein arginine N-methyltransferase 2 (433 aa).

Residues Met1–Cys20 form a disordered region. 2 interaction with ESR1 regions span residues Met1 to Lys277 and Lys133 to Ala275. Residues Val30–Asp89 enclose the SH3 domain. Asymmetric dimethylarginine is present on residues Arg61 and Arg72. Residues His83–Val207 form an interaction with RB1 region. One can recognise an SAM-dependent MTase PRMT-type domain in the interval Asp99–Trp432. S-adenosyl-L-methionine-binding residues include His112, Arg121, Gly145, Glu168, and Glu197. Catalysis depends on residues Glu211 and Glu220.

Belongs to the class I-like SAM-binding methyltransferase superfamily. Protein arginine N-methyltransferase family. Self-associates. Interacts with RB1 and E2F1. Interacts with NCOA6 coactivator. Interacts (via SH3 domain) with PRMT8. Interacts with AR. Interacts with NFKBIA. Interacts with ESR1, ESR2, PGR, PPARG, RARA, RXRA and THRB. Interacts with HNRNPUL1. In terms of tissue distribution, widely expressed. Highly expressed in androgen target organs such as heart, prostate, skeletal muscle, ovary and spinal cord.

The protein localises to the cytoplasm. It is found in the nucleus. It localises to the nucleolus. The enzyme catalyses L-arginyl-[protein] + 2 S-adenosyl-L-methionine = N(omega),N(omega)-dimethyl-L-arginyl-[protein] + 2 S-adenosyl-L-homocysteine + 2 H(+). Arginine methyltransferase that methylates the guanidino nitrogens of arginyl residues in proteins such as STAT3, FBL, histone H4. Acts as a coactivator (with NCOA2) of the androgen receptor (AR)-mediated transactivation. Acts as a coactivator (with estrogen) of estrogen receptor (ER)-mediated transactivation. Enhances PGR, PPARG, RARA-mediated transactivation. May inhibit NF-kappa-B transcription and promote apoptosis. Represses E2F1 transcriptional activity (in a RB1-dependent manner). May be involved in growth regulation. In Homo sapiens (Human), this protein is Protein arginine N-methyltransferase 2 (PRMT2).